The sequence spans 223 residues: Phosphoribosylformylglycinamidine synthase subunit PurQ (223 aa).

One can recognise a Glutamine amidotransferase type-1 domain in the interval 3–223; the sequence is SAVILLPGLN…LFAGALGITA (221 aa). Residue Cys-87 is the Nucleophile of the active site. Active-site residues include His-197 and Glu-199.

Part of the FGAM synthase complex composed of 1 PurL, 1 PurQ and 2 PurS subunits.

The protein localises to the cytoplasm. It carries out the reaction N(2)-formyl-N(1)-(5-phospho-beta-D-ribosyl)glycinamide + L-glutamine + ATP + H2O = 2-formamido-N(1)-(5-O-phospho-beta-D-ribosyl)acetamidine + L-glutamate + ADP + phosphate + H(+). It catalyses the reaction L-glutamine + H2O = L-glutamate + NH4(+). The protein operates within purine metabolism; IMP biosynthesis via de novo pathway; 5-amino-1-(5-phospho-D-ribosyl)imidazole from N(2)-formyl-N(1)-(5-phospho-D-ribosyl)glycinamide: step 1/2. Part of the phosphoribosylformylglycinamidine synthase complex involved in the purines biosynthetic pathway. Catalyzes the ATP-dependent conversion of formylglycinamide ribonucleotide (FGAR) and glutamine to yield formylglycinamidine ribonucleotide (FGAM) and glutamate. The FGAM synthase complex is composed of three subunits. PurQ produces an ammonia molecule by converting glutamine to glutamate. PurL transfers the ammonia molecule to FGAR to form FGAM in an ATP-dependent manner. PurS interacts with PurQ and PurL and is thought to assist in the transfer of the ammonia molecule from PurQ to PurL. In Brucella suis biovar 1 (strain 1330), this protein is Phosphoribosylformylglycinamidine synthase subunit PurQ.